The following is a 532-amino-acid chain: MENYPETQFIPGDSMIQNAIVSYSEESAGRERRTEANNVSASQERQALSRFGGVPQMQNIGQDFGSWRDQASDRNGFQLMSAMAGATGILQTGQGLSLSLGSQILPGIHQISHQNMAPRGNEYATQSFPGGNQNLDVVRTIPNSKYLKAAQQLLDEAVNVKKALKQFQAEGDKNNENPQEPNQSTQDSSTNPPADISQSERQEMQSKLTKLLSMLDEVDRRYKQYYQQMQIVVSSFDVIAGYGAAKPYTALALQTISRHFRSLRDAISGQILVLRKCLGEQQDGSDGKRVGIISRLKYVDQHLRQQRGFMQPQAWRPQRGLPENSVLILRAWLFEHFLHPYPKDSDKIMLARQTGLSRGQVSNWFINARVRLWKPMVEEIYKEEFTENDSNSSSENTPKMSEIGPVAADDEDRAREFSQDQTKPDHGHGYGEETRGMVQGSHMDGRRFMAVEPTYHVADTSRLGRGDVSLTLGLQNSQGQDNVVAMSSEAYNNFSGVDIYENAIPGDEMEYVNPGSRQNRINSSQLVHDFVA.

The tract at residues 144 to 160 (SKYLKAAQQLLDEAVNV) is SR/KY domain. The segment at 170–203 (EGDKNNENPQEPNQSTQDSSTNPPADISQSERQE) is disordered. Residues 176–197 (ENPQEPNQSTQDSSTNPPADIS) are compositionally biased toward polar residues. The segment at 200–271 (ERQEMQSKLT…SLRDAISGQI (72 aa)) is BELL domain. A DNA-binding region (homeobox) is located at residues 314–376 (AWRPQRGLPE…NARVRLWKPM (63 aa)). The tract at residues 385 to 434 (FTENDSNSSSENTPKMSEIGPVAADDEDRAREFSQDQTKPDHGHGYGEET) is disordered. Residues 412–434 (DRAREFSQDQTKPDHGHGYGEET) show a composition bias toward basic and acidic residues.

This sequence belongs to the TALE/BELL homeobox family. As to quaternary structure, may form heterodimeric complexes with TALE/KNOX proteins. Interacts with OFP2, OFP4, and OFP5.

The protein localises to the nucleus. This Arabidopsis thaliana (Mouse-ear cress) protein is BEL1-like homeodomain protein 6 (BLH6).